A 252-amino-acid polypeptide reads, in one-letter code: Ribose-5-phosphate isomerase (252 aa).

It belongs to the ribose 5-phosphate isomerase family.

It is found in the cytoplasm. It carries out the reaction aldehydo-D-ribose 5-phosphate = D-ribulose 5-phosphate. Its pathway is carbohydrate degradation; pentose phosphate pathway; D-ribose 5-phosphate from D-ribulose 5-phosphate (non-oxidative stage): step 1/1. The chain is Ribose-5-phosphate isomerase (RKI1) from Debaryomyces hansenii (strain ATCC 36239 / CBS 767 / BCRC 21394 / JCM 1990 / NBRC 0083 / IGC 2968) (Yeast).